A 316-amino-acid polypeptide reads, in one-letter code: Alkaline ceramidase YPC1 (316 aa).

At 1–36 (MGIFRWNYPESSVPGVWGETTSTIDWCEENYVVSPY) the chain is on the lumenal side. The cysteines at positions 27 and 219 are disulfide-linked. The stretch at 37–57 (IAEWSNTLTNSVFILSAIYTT) is an intramembrane region. Over 58–68 (YSAYKNKLEKR) the chain is Lumenal. The stretch at 69–89 (FLLIGFGYGLVGVGSWLFHMT) is an intramembrane region. Over 90–93 (LKYR) the chain is Lumenal. Residues 94 to 114 (FQLLDELPMIYAMCIPTWSLV) form a helical membrane-spanning segment. The Cytoplasmic portion of the chain corresponds to 115–135 (CEAKEALLNGDNHKKVPLFEQ). Residues 136–156 (IFIGVIIGLAVTTASILYVIY) traverse the membrane as a helical segment. At 157–160 (KNVD) the chain is on the lumenal side. Residues 161–181 (IHQILFGVQIVVVAATAGSLT) lie within the membrane without spanning it. At 182–195 (YRYVHDPLAKRNLK) the chain is on the lumenal side. The stretch at 196–216 (ASMALGAILFLSGYISWLLDI) is an intramembrane region. Topologically, residues 217–228 (HYCSFWVHVRRS) are lumenal. The helical transmembrane segment at 229-249 (ILALPLGVLLEPHGWWHILTG) threads the bilayer. The Cytoplasmic portion of the chain corresponds to 250 to 316 (MGIYFYIVSL…DQSIEVKKEK (67 aa)).

This sequence belongs to the alkaline ceramidase family.

It localises to the endoplasmic reticulum membrane. It catalyses the reaction N-hexanoyl-sphinganine + H2O = hexanoate + sphinganine. The catalysed reaction is sphinganine + hexadecanoate = N-hexadecanoylsphinganine + H2O. The enzyme catalyses N-hexadecanoyl-(4R)-hydroxysphinganine + H2O = (4R)-hydroxysphinganine + hexadecanoate. It carries out the reaction N-hexadecanoylsphing-4-enine + H2O = sphing-4-enine + hexadecanoate. It catalyses the reaction an N-acyl-(4R)-4-hydroxysphinganine + H2O = (4R)-hydroxysphinganine + a fatty acid. Functionally, alkaline ceramidase that hydrolyzes phytoceramide and also dihydroceramide into phytosphingosine or dihydrosphingosine. Prefers phytoceramide. Also has reverse activity as acyl-CoA-independent ceramide synthase, catalyzing synthesis of phytoceramide and dihydroceramide from palmitic acid and phytosphingosine or dihydrosphingosine. Is not responsible for the breakdown of unsaturated ceramide. Preferentially uses very long chain fatty acids (C-24 and C-26) in vivo compared to C-16 in vitro. The protein is Alkaline ceramidase YPC1 (YPC1) of Saccharomyces cerevisiae (strain ATCC 204508 / S288c) (Baker's yeast).